Consider the following 1074-residue polypeptide: Chitin synthase 2 (1074 aa).

Disordered regions lie at residues 1 to 32 (MSHY…AHSG), 56 to 179 (QAAP…PSQH), and 209 to 255 (RSDS…PYNN). Residues 19–29 (DQQQPYYTDQA) are compositionally biased toward polar residues. Over residues 68 to 80 (RIRSNSSGSRSVS) the composition is skewed to low complexity. N-linked (GlcNAc...) asparagine glycosylation is found at asparagine 72 and asparagine 97. The segment covering 85 to 119 (AYTNQGIPPVPSNLSAARQRSDPSQALPPSSSSYA) has biased composition (polar residues). Low complexity predominate over residues 129–143 (SSHRNAPNAPNSNHP). The N-linked (GlcNAc...) asparagine glycan is linked to asparagine 149. Asparagine 289 is a glycosylation site (N-linked (GlcNAc...) asparagine). A run of 8 helical transmembrane segments spans residues 608-628 (VFGF…KALL), 742-762 (LVLL…FYFL), 779-799 (GAAI…VVLV), 817-837 (IIIF…TIYL), 867-887 (IVIS…LHLE), 891-911 (MLTS…ILSM), 1001-1021 (LVLI…STWW), and 1048-1068 (IFWS…TFLL).

The protein belongs to the chitin synthase family. Class II subfamily.

It localises to the cell membrane. The protein resides in the cytoplasmic vesicle membrane. The enzyme catalyses [(1-&gt;4)-N-acetyl-beta-D-glucosaminyl](n) + UDP-N-acetyl-alpha-D-glucosamine = [(1-&gt;4)-N-acetyl-beta-D-glucosaminyl](n+1) + UDP + H(+). Functionally, polymerizes chitin, a structural polymer of the cell wall and septum, by transferring the sugar moiety of UDP-GlcNAc to the non-reducing end of the growing chitin polymer. The sequence is that of Chitin synthase 2 (CHS2) from Mycosarcoma maydis (Corn smut fungus).